Consider the following 317-residue polypeptide: MCTGVRFSDDEGNTYFGRNLDWSFSYGETILVTPRGYHYDTVFGAGGKAKPNAVIGVGVVMADRPMYFDCANEHGLAIAGLNFPGYASFVHEPVEGTENVATFEFPLWVARNFDSVDEVEETLRNVTLVSQIVPGQQESLLHWFIGDGKRSIVVEQMADGMHVHHDDVDVLTNQPTFDFHMENLRNYMCVSNEMAEPTSWGKASLTAWGAGVGMHGIPGDVSSPSRFVRVAYTNAHYPQQNDEAANVSRLFHTLGSVQMVDGMAKMGDGQFERTLFTSGYSSKTNTYYMNTYDDPAIRSYAMADYDMDSSELISVAR.

Residue cysteine 2 is the Nucleophile; acyl-thioester intermediate of the active site. 2 residues coordinate deoxycholate: cysteine 2 and arginine 18. Asparagine 82 contributes to the taurine binding site.

This sequence belongs to the peptidase C59 family. As to quaternary structure, homotetramer. The tetramer consists of a dimer of dimers.

The enzyme catalyses glycocholate + H2O = cholate + glycine. The catalysed reaction is glycodeoxycholate + H2O = deoxycholate + glycine. It catalyses the reaction chenodeoxycholate + glycine = glycochenodeoxycholate + H2O. It carries out the reaction cholate + taurine = taurocholate + H2O. The enzyme catalyses taurodeoxycholate + H2O = deoxycholate + taurine. The catalysed reaction is taurochenodeoxycholate + H2O = chenodeoxycholate + taurine. It catalyses the reaction an L-alpha-amino acid + cholate = an N-choloyl-L-alpha-amino acid + H2O. It carries out the reaction an L-alpha-amino acid + taurocholate = an N-choloyl-L-alpha-amino acid + taurine. The enzyme catalyses cholate + L-alanine = L-alanocholate + H2O. The catalysed reaction is taurocholate + L-alanine = L-alanocholate + taurine. It catalyses the reaction cholate + L-serine = L-serocholate + H2O. It carries out the reaction taurocholate + L-serine = L-serocholate + taurine. The enzyme catalyses cholate + L-histidine = L-histidocholate + H2O. The catalysed reaction is taurocholate + L-histidine = L-histidocholate + taurine. It functions in the pathway lipid metabolism; bile acid biosynthesis. Its activity is regulated as follows. Hydrolase activity is competitively inhibited by the products cholate (CA) and deoxycholate (DCA), and by phenylacetate and 4-aminophenylacetate. Penicillin V and penicillin G show mixed inhibition. Strongly inhibited by thiol enzyme inhibitors in vitro. Possesses dual functions in bile acid metabolism. Acts as a bile salt hydrolase that catalyzes the deconjugation of glycine- and taurine-linked bile salts, which occurs naturally in the intestines of humans, releasing amino acid residues and deconjugated bile salts (bile acids). Can hydrolyze the amide bond in all six major human conjugated bile salts, namely glycocholate (GCA), glycodeoxycholate (GDCA), glycochenodeoxycholate (GCDCA), taurocholate (TCA), taurodeoxycholate (TDCA) and taurochenodeoxycholate (TCDCA). Shows a slight preference for glycine-conjugated bile acids as substrates. Also acts as an amine N-acyltransferase that conjugates a wide variety of amino acids to conjugated and non-conjugated bile acids, thus producing bacterial bile acid amidates (BBAAs) - also named microbially conjugated bile acids (MCBAs) - in the gastrointestinal tract. These BBAAs may facilitate communication between the microbiota and host through the activation of human ligand-activated transcription factors. Is totally inactive toward penicillin V. In Bifidobacterium longum, this protein is Bile salt hydrolase/transferase.